Consider the following 156-residue polypeptide: ATP synthase subunit b (156 aa).

Residues 7–27 (IFFQMLVFFVLGWFTMKFVWP) form a helical membrane-spanning segment.

It belongs to the ATPase B chain family. F-type ATPases have 2 components, F(1) - the catalytic core - and F(0) - the membrane proton channel. F(1) has five subunits: alpha(3), beta(3), gamma(1), delta(1), epsilon(1). F(0) has three main subunits: a(1), b(2) and c(10-14). The alpha and beta chains form an alternating ring which encloses part of the gamma chain. F(1) is attached to F(0) by a central stalk formed by the gamma and epsilon chains, while a peripheral stalk is formed by the delta and b chains.

Its subcellular location is the cell inner membrane. In terms of biological role, f(1)F(0) ATP synthase produces ATP from ADP in the presence of a proton or sodium gradient. F-type ATPases consist of two structural domains, F(1) containing the extramembraneous catalytic core and F(0) containing the membrane proton channel, linked together by a central stalk and a peripheral stalk. During catalysis, ATP synthesis in the catalytic domain of F(1) is coupled via a rotary mechanism of the central stalk subunits to proton translocation. Functionally, component of the F(0) channel, it forms part of the peripheral stalk, linking F(1) to F(0). This is ATP synthase subunit b from Bordetella petrii (strain ATCC BAA-461 / DSM 12804 / CCUG 43448).